Reading from the N-terminus, the 243-residue chain is Carboxy-S-adenosyl-L-methionine synthase (243 aa).

Residues Tyr-40, 65-67, 90-91, 118-119, Asn-133, and Arg-200 contribute to the S-adenosyl-L-methionine site; these read GCS, DN, and DI.

The protein belongs to the class I-like SAM-binding methyltransferase superfamily. Cx-SAM synthase family. As to quaternary structure, homodimer.

The enzyme catalyses prephenate + S-adenosyl-L-methionine = carboxy-S-adenosyl-L-methionine + 3-phenylpyruvate + H2O. Catalyzes the conversion of S-adenosyl-L-methionine (SAM) to carboxy-S-adenosyl-L-methionine (Cx-SAM). This chain is Carboxy-S-adenosyl-L-methionine synthase, found in Shewanella sediminis (strain HAW-EB3).